A 445-amino-acid chain; its full sequence is GTPase Der (445 aa).

2 EngA-type G domains span residues 3–166 (PVIA…AERV) and 180–353 (IRIG…ESCY). Residues 9 to 16 (GRPNVGKS), 56 to 60 (DTGGI), 118 to 121 (NKTD), 186 to 193 (GRPNVGKS), 233 to 237 (DTAGI), and 298 to 301 (NKWD) contribute to the GTP site. The KH-like domain occupies 354–438 (AKWTTNRLTR…PIIFEFKSAE (85 aa)).

This sequence belongs to the TRAFAC class TrmE-Era-EngA-EngB-Septin-like GTPase superfamily. EngA (Der) GTPase family. Associates with the 50S ribosomal subunit.

Its function is as follows. GTPase that plays an essential role in the late steps of ribosome biogenesis. The protein is GTPase Der of Marinomonas sp. (strain MWYL1).